Consider the following 20-residue polypeptide: Peptide encoded by miPEP171b (20 aa).

Lateral root initiations.

In terms of biological role, regulatory peptide encoded by the primary transcript (pri-miR171b) of the microRNA miR171b that enhances the accumulation of its corresponding mature miRNA. Acts probably as a transcriptional activator of its corresponding pri-miRNA. Has no effect on the accumulation of other miRNAs. Addition of synthetic miPEP171b increases the abundance of miR171b, with consequent reduction of lateral root formation. This Medicago truncatula (Barrel medic) protein is Peptide encoded by miPEP171b.